A 214-amino-acid polypeptide reads, in one-letter code: Charged multivesicular body protein 2b (214 aa).

Residues 25-55 adopt a coiled-coil conformation; sequence QRTITRDRAALEKQERQLELEIKKMAKTGNK. Positions 179 to 201 are disordered; the sequence is AKAPSAARGLPSASTSKASTISD. Residues 190 to 199 are compositionally biased toward polar residues; it reads SASTSKASTI. The MIT-interacting motif signature appears at 202–212; it reads EEIERQLKALG.

Belongs to the SNF7 family. As to quaternary structure, probable core component of the endosomal sorting required for transport complex III (ESCRT-III). ESCRT-III components are thought to multimerize to form a flat lattice on the perimeter membrane of the endosome.

Its subcellular location is the cytoplasm. The protein resides in the cytosol. It localises to the late endosome membrane. In terms of biological role, probable core component of the endosomal sorting required for transport complex III (ESCRT-III) which is involved in multivesicular bodies (MVBs) formation and sorting of endosomal cargo proteins into MVBs. MVBs contain intraluminal vesicles (ILVs) that are generated by invagination and scission from the limiting membrane of the endosome and mostly are delivered to lysosomes enabling degradation of membrane proteins, such as stimulated growth factor receptors, lysosomal enzymes and lipids. The sequence is that of Charged multivesicular body protein 2b (CHMP2B) from Gallus gallus (Chicken).